We begin with the raw amino-acid sequence, 172 residues long: Translationally-controlled tumor protein homolog (172 aa).

Residues 1–172 (MIIYRDCISQ…FKDGLEIEKC (172 aa)) enclose the TCTP domain. Ser-46 carries the post-translational modification Phosphoserine; by PLK1.

This sequence belongs to the TCTP family.

Its subcellular location is the cytoplasm. Involved in calcium binding and microtubule stabilization. The protein is Translationally-controlled tumor protein homolog (TPT1) of Gallus gallus (Chicken).